A 281-amino-acid chain; its full sequence is Elongation factor Ts (281 aa).

The involved in Mg(2+) ion dislocation from EF-Tu stretch occupies residues 80 to 83; that stretch reads TDFV.

The protein belongs to the EF-Ts family.

Its subcellular location is the cytoplasm. Associates with the EF-Tu.GDP complex and induces the exchange of GDP to GTP. It remains bound to the aminoacyl-tRNA.EF-Tu.GTP complex up to the GTP hydrolysis stage on the ribosome. The protein is Elongation factor Ts of Vibrio atlanticus (strain LGP32) (Vibrio splendidus (strain Mel32)).